A 1030-amino-acid polypeptide reads, in one-letter code: Importin beta-like SAD2 homolog (1030 aa).

Residue Met1 is modified to N-acetylmethionine. In terms of domain architecture, Importin N-terminal spans 25 to 99 (AEQSLNQLQH…RNQILVFVSQ (75 aa)). Disordered stretches follow at residues 886-928 (AAKA…GSTL) and 940-964 (SYSDDDDFSDDDFSDDEELESPIDE). Acidic residues-rich tracts occupy residues 890-924 (EEEEEDEDGDDDDMDEFQTDDEDEDGDDENPDETD) and 943-964 (DDDDFSDDDFSDDEELESPIDE).

It belongs to the importin beta family.

It is found in the cytoplasm. Its subcellular location is the nucleus. Functionally, functions probably in nuclear protein import, either by acting as autonomous nuclear transport receptor or as an adapter-like protein in association with other importin subunits. The sequence is that of Importin beta-like SAD2 homolog from Arabidopsis thaliana (Mouse-ear cress).